We begin with the raw amino-acid sequence, 114 residues long: uncharacterized protein (114 aa).

This is an uncharacterized protein from Mycobacterium bovis (strain ATCC BAA-935 / AF2122/97).